Reading from the N-terminus, the 258-residue chain is Deoxyribose-phosphate aldolase (258 aa).

Asp101 (proton donor/acceptor) is an active-site residue. The Schiff-base intermediate with acetaldehyde role is filled by Lys166. Catalysis depends on Lys200, which acts as the Proton donor/acceptor.

This sequence belongs to the DeoC/FbaB aldolase family. DeoC type 2 subfamily.

It localises to the cytoplasm. It carries out the reaction 2-deoxy-D-ribose 5-phosphate = D-glyceraldehyde 3-phosphate + acetaldehyde. Its pathway is carbohydrate degradation; 2-deoxy-D-ribose 1-phosphate degradation; D-glyceraldehyde 3-phosphate and acetaldehyde from 2-deoxy-alpha-D-ribose 1-phosphate: step 2/2. Catalyzes a reversible aldol reaction between acetaldehyde and D-glyceraldehyde 3-phosphate to generate 2-deoxy-D-ribose 5-phosphate. The chain is Deoxyribose-phosphate aldolase from Actinobacillus pleuropneumoniae serotype 3 (strain JL03).